The chain runs to 276 residues: Octanoyltransferase LipM (276 aa).

The BPL/LPL catalytic domain occupies 32–247 (GALPPVIRFY…GFEKGLDIKL (216 aa)). Cys149 (acyl-thioester intermediate) is an active-site residue.

This sequence belongs to the octanoyltransferase LipM family. Monomer.

It carries out the reaction octanoyl-[ACP] + L-lysyl-[protein] = N(6)-octanoyl-L-lysyl-[protein] + holo-[ACP] + H(+). It participates in protein modification; protein lipoylation via endogenous pathway; protein N(6)-(lipoyl)lysine from octanoyl-[acyl-carrier-protein]. In terms of biological role, catalyzes the transfer of endogenously produced octanoic acid from octanoyl-acyl-carrier-protein onto the lipoyl domain of GcvH, an intermediate carrier during protein lipoylation. In Macrococcus caseolyticus (strain JCSC5402) (Macrococcoides caseolyticum), this protein is Octanoyltransferase LipM.